The following is a 565-amino-acid chain: Dihydroxy-acid dehydratase (565 aa).

[2Fe-2S] cluster is bound at residue Cys53. A Mg(2+)-binding site is contributed by Asp85. Cys126 lines the [2Fe-2S] cluster pocket. 2 residues coordinate Mg(2+): Asp127 and Lys128. An N6-carboxylysine modification is found at Lys128. Cys198 contacts [2Fe-2S] cluster. Residue Glu450 participates in Mg(2+) binding. Ser476 serves as the catalytic Proton acceptor.

Belongs to the IlvD/Edd family. In terms of assembly, homodimer. [2Fe-2S] cluster is required as a cofactor. It depends on Mg(2+) as a cofactor.

It carries out the reaction (2R)-2,3-dihydroxy-3-methylbutanoate = 3-methyl-2-oxobutanoate + H2O. The enzyme catalyses (2R,3R)-2,3-dihydroxy-3-methylpentanoate = (S)-3-methyl-2-oxopentanoate + H2O. It functions in the pathway amino-acid biosynthesis; L-isoleucine biosynthesis; L-isoleucine from 2-oxobutanoate: step 3/4. Its pathway is amino-acid biosynthesis; L-valine biosynthesis; L-valine from pyruvate: step 3/4. Functionally, functions in the biosynthesis of branched-chain amino acids. Catalyzes the dehydration of (2R,3R)-2,3-dihydroxy-3-methylpentanoate (2,3-dihydroxy-3-methylvalerate) into 2-oxo-3-methylpentanoate (2-oxo-3-methylvalerate) and of (2R)-2,3-dihydroxy-3-methylbutanoate (2,3-dihydroxyisovalerate) into 2-oxo-3-methylbutanoate (2-oxoisovalerate), the penultimate precursor to L-isoleucine and L-valine, respectively. The chain is Dihydroxy-acid dehydratase from Synechococcus sp. (strain JA-3-3Ab) (Cyanobacteria bacterium Yellowstone A-Prime).